We begin with the raw amino-acid sequence, 264 residues long: Rhodanese-like domain-containing protein 4A, chloroplastic (264 aa).

Residues 1-60 (MTSLPIILASSPLRNLTKPCSTSQIPKPIQNSTKQPPIHLLTKTNLSVTISQLIITSPVL) constitute a chloroplast transit peptide. The helical transmembrane segment at 95 to 115 (FFVAGCTFTYLVVYPAVMFYL) threads the bilayer. The 101-residue stretch at 132–232 (NESDSQLLDI…ARGKNGWLAI (101 aa)) folds into the Rhodanese domain.

It is found in the plastid. The protein resides in the chloroplast. Its subcellular location is the membrane. This is Rhodanese-like domain-containing protein 4A, chloroplastic (STR4A) from Arabidopsis thaliana (Mouse-ear cress).